The following is a 62-amino-acid chain: Single-pass membrane and coiled-coil domain-containing protein 4 homolog (62 aa).

Residues 1 to 27 (MRQLPGKAAKETRKMKRERKQQNKEGH) are disordered. Residues 9–31 (AKETRKMKRERKQQNKEGHNRVV) are a coiled coil. Residues 30–50 (VVTVAIPVCLAVFVMLIVYVY) traverse the membrane as a helical segment.

It belongs to the SMCO4 family.

The protein localises to the membrane. In Nematostella vectensis (Starlet sea anemone), this protein is Single-pass membrane and coiled-coil domain-containing protein 4 homolog.